The following is a 476-amino-acid chain: 3-isopropylmalate dehydratase large subunit (476 aa).

The [4Fe-4S] cluster site is built by cysteine 353, cysteine 413, and cysteine 416.

The protein belongs to the aconitase/IPM isomerase family. LeuC type 1 subfamily. In terms of assembly, heterodimer of LeuC and LeuD. It depends on [4Fe-4S] cluster as a cofactor.

It carries out the reaction (2R,3S)-3-isopropylmalate = (2S)-2-isopropylmalate. Its pathway is amino-acid biosynthesis; L-leucine biosynthesis; L-leucine from 3-methyl-2-oxobutanoate: step 2/4. Functionally, catalyzes the isomerization between 2-isopropylmalate and 3-isopropylmalate, via the formation of 2-isopropylmaleate. This Yersinia enterocolitica serotype O:8 / biotype 1B (strain NCTC 13174 / 8081) protein is 3-isopropylmalate dehydratase large subunit.